The following is a 170-amino-acid chain: Ribosome maturation factor RimM (170 aa).

In terms of domain architecture, PRC barrel spans 92–163 (KEGWYYFELE…RMDVELPPGL (72 aa)).

Belongs to the RimM family. In terms of assembly, binds ribosomal protein uS19.

It is found in the cytoplasm. Its function is as follows. An accessory protein needed during the final step in the assembly of 30S ribosomal subunit, possibly for assembly of the head region. Essential for efficient processing of 16S rRNA. May be needed both before and after RbfA during the maturation of 16S rRNA. It has affinity for free ribosomal 30S subunits but not for 70S ribosomes. The protein is Ribosome maturation factor RimM of Desulfitobacterium hafniense (strain Y51).